The chain runs to 20 residues: Brevinin-1T (20 aa).

Cys14 and Cys20 are joined by a disulfide.

Belongs to the frog skin active peptide (FSAP) family. Brevinin subfamily. In terms of tissue distribution, expressed by the skin glands.

Its subcellular location is the secreted. Functionally, antibacterial activity against representative Gram-negative and Gram-positive bacteria and exhibits a very high hemolytic activity. This Rana temporaria (European common frog) protein is Brevinin-1T.